The sequence spans 627 residues: 1-deoxy-D-xylulose-5-phosphate synthase (627 aa).

Residues His80 and 121–123 (GHS) contribute to the thiamine diphosphate site. Position 152 (Asp152) interacts with Mg(2+). Thiamine diphosphate-binding positions include 153–154 (GA), Asn181, Tyr288, and Glu370. Residue Asn181 participates in Mg(2+) binding.

The protein belongs to the transketolase family. DXPS subfamily. Homodimer. Mg(2+) serves as cofactor. Requires thiamine diphosphate as cofactor.

The enzyme catalyses D-glyceraldehyde 3-phosphate + pyruvate + H(+) = 1-deoxy-D-xylulose 5-phosphate + CO2. It participates in metabolic intermediate biosynthesis; 1-deoxy-D-xylulose 5-phosphate biosynthesis; 1-deoxy-D-xylulose 5-phosphate from D-glyceraldehyde 3-phosphate and pyruvate: step 1/1. Catalyzes the acyloin condensation reaction between C atoms 2 and 3 of pyruvate and glyceraldehyde 3-phosphate to yield 1-deoxy-D-xylulose-5-phosphate (DXP). This chain is 1-deoxy-D-xylulose-5-phosphate synthase, found in Vibrio atlanticus (strain LGP32) (Vibrio splendidus (strain Mel32)).